The chain runs to 890 residues: Translation initiation factor IF-2 (890 aa).

The interval 45–304 (LIDHLNQKNS…LQQGFQKPAQ (260 aa)) is disordered. The segment covering 67–81 (STLNIPGTGGKSKSV) has biased composition (polar residues). The segment covering 92 to 217 (VKRDPQEAER…RMAEENKWTD (126 aa)) has biased composition (basic and acidic residues). The span at 252-266 (GRGRNAKAARPKKGN) shows a compositional bias: basic residues. Residues 267–280 (KHAESKADREEARA) show a composition bias toward basic and acidic residues. The tr-type G domain occupies 389 to 558 (PRAPVVTIMG…LLQAEVLELK (170 aa)). Residues 398–405 (GHVDHGKT) are G1. 398 to 405 (GHVDHGKT) contacts GTP. The interval 423-427 (GITQH) is G2. A G3 region spans residues 444-447 (DTPG). Residues 444–448 (DTPGH) and 498–501 (NKID) contribute to the GTP site. A G4 region spans residues 498 to 501 (NKID). Residues 534–536 (SAK) form a G5 region. An N6-acetyllysine modification is found at lysine 808.

It belongs to the TRAFAC class translation factor GTPase superfamily. Classic translation factor GTPase family. IF-2 subfamily.

The protein localises to the cytoplasm. Its function is as follows. One of the essential components for the initiation of protein synthesis. Protects formylmethionyl-tRNA from spontaneous hydrolysis and promotes its binding to the 30S ribosomal subunits. Also involved in the hydrolysis of GTP during the formation of the 70S ribosomal complex. The chain is Translation initiation factor IF-2 from Shigella sonnei (strain Ss046).